The sequence spans 124 residues: Small ribosomal subunit protein uS12 (124 aa).

A 3-methylthioaspartic acid modification is found at Asp89.

The protein belongs to the universal ribosomal protein uS12 family. Part of the 30S ribosomal subunit. Contacts proteins S8 and S17. May interact with IF1 in the 30S initiation complex.

Its function is as follows. With S4 and S5 plays an important role in translational accuracy. Interacts with and stabilizes bases of the 16S rRNA that are involved in tRNA selection in the A site and with the mRNA backbone. Located at the interface of the 30S and 50S subunits, it traverses the body of the 30S subunit contacting proteins on the other side and probably holding the rRNA structure together. The combined cluster of proteins S8, S12 and S17 appears to hold together the shoulder and platform of the 30S subunit. In Hamiltonella defensa subsp. Acyrthosiphon pisum (strain 5AT), this protein is Small ribosomal subunit protein uS12.